Consider the following 362-residue polypeptide: GMP reductase (362 aa).

NADP(+)-binding positions include Ser-26–Arg-27, Lys-78, Asp-129–Ala-131, and Ile-180–Gly-181. Residues Gly-181, Gly-183, and Cys-186 each coordinate K(+). Cys-186 acts as the Thioimidate intermediate in catalysis. The Proton donor/acceptor role is filled by Thr-188. Arg-189 provides a ligand contact to K(+). GMP-binding positions include Asp-219–Gly-221, Gly-242–Gly-243, Gly-268–Ser-270, and Arg-286–Gly-290. NADP(+) contacts are provided by residues Met-269, Tyr-285 to Arg-286, and Ser-314 to Thr-317.

The protein belongs to the IMPDH/GMPR family.

It catalyses the reaction IMP + NH4(+) + NADP(+) = GMP + NADPH + 2 H(+). Catalyzes the irreversible NADPH-dependent deamination of GMP to IMP. It functions in the conversion of nucleobase, nucleoside and nucleotide derivatives of G to A nucleotides, and in maintaining the intracellular balance of A and G nucleotides. In Phytophthora infestans (Potato late blight agent), this protein is GMP reductase.